The chain runs to 326 residues: Deoxyuridine 5'-triphosphate nucleotidohydrolase (326 aa).

Residues 218-220 and 321-322 contribute to the substrate site; these read RSS and FG.

This sequence belongs to the dUTPase family. The cofactor is Mg(2+).

The enzyme catalyses dUTP + H2O = dUMP + diphosphate + H(+). Functionally, involved in nucleotide metabolism: produces dUMP, the immediate precursor of thymidine nucleotides and decreases the intracellular concentration of dUTP to avoid uracil incorporation into viral DNA. This is Deoxyuridine 5'-triphosphate nucleotidohydrolase from Equus caballus (Horse).